The sequence spans 100 residues: Pregnancy-associated protein bPAP (100 aa).

Residues 1-40 (DSELAGPRGARGPHGLSGPHGLSGLXGPXGYTGPIGMXGL) are disordered. Low complexity predominate over residues 13–29 (PHGLSGPHGLSGLXGPX).

In terms of tissue distribution, detected at high levels in the urine of pregnant females (at protein level) and at far lower levels in the urine of nonpregnant females.

In Bos taurus (Bovine), this protein is Pregnancy-associated protein bPAP.